The chain runs to 259 residues: Snake venom serine protease homolog rhinocerase 2 (259 aa).

An N-terminal signal peptide occupies residues 1 to 17 (VLIRVLANLLLLQLSYA). A propeptide spanning residues 18–23 (QESSEL) is cleaved from the precursor. Residues 24–250 (VIGGDECDIN…YTDWIEGIIA (227 aa)) enclose the Peptidase S1 domain. 6 disulfide bridges follow: cysteine 30–cysteine 164, cysteine 51–cysteine 67, cysteine 99–cysteine 257, cysteine 143–cysteine 211, cysteine 175–cysteine 190, and cysteine 201–cysteine 226. A glycan (N-linked (GlcNAc...) asparagine) is linked at asparagine 252.

It belongs to the peptidase S1 family. Snake venom subfamily. In terms of tissue distribution, expressed by the venom gland.

The protein resides in the secreted. In terms of biological role, snake venom serine protease homolog that may act in the hemostasis system of the prey. In Bitis rhinoceros (West African gaboon viper), this protein is Snake venom serine protease homolog rhinocerase 2.